Here is a 148-residue protein sequence, read N- to C-terminus: IQ domain-containing protein F5 (148 aa).

IQ domains follow at residues Glu11–Ile40 and Gln67–Ile96.

This chain is IQ domain-containing protein F5 (IQCF5), found in Homo sapiens (Human).